Reading from the N-terminus, the 379-residue chain is Homoserine O-succinyltransferase (379 aa).

The AB hydrolase-1 domain maps to 51–360 (NAVLICHALS…DAPQGHDAFL (310 aa)). Serine 157 serves as the catalytic Nucleophile. Arginine 227 contacts substrate. Active-site residues include aspartate 323 and histidine 356. Aspartate 357 contacts substrate.

This sequence belongs to the AB hydrolase superfamily. MetX family. Homodimer.

Its subcellular location is the cytoplasm. It carries out the reaction L-homoserine + succinyl-CoA = O-succinyl-L-homoserine + CoA. Its pathway is amino-acid biosynthesis; L-methionine biosynthesis via de novo pathway; O-succinyl-L-homoserine from L-homoserine: step 1/1. In terms of biological role, transfers a succinyl group from succinyl-CoA to L-homoserine, forming succinyl-L-homoserine. The sequence is that of Homoserine O-succinyltransferase from Pseudomonas fluorescens (strain SBW25).